Consider the following 104-residue polypeptide: MAAKIRREDEIIVLAGKDKGKRAKVSQVLPTGKLIVEGINLVKKHQKPNPQLGVTGGVIEKEAPIQTSNVAIFNQATGKADRVGFRFEDGKKVRFFKSNSELIK.

Belongs to the universal ribosomal protein uL24 family. In terms of assembly, part of the 50S ribosomal subunit.

Its function is as follows. One of two assembly initiator proteins, it binds directly to the 5'-end of the 23S rRNA, where it nucleates assembly of the 50S subunit. One of the proteins that surrounds the polypeptide exit tunnel on the outside of the subunit. In Shewanella denitrificans (strain OS217 / ATCC BAA-1090 / DSM 15013), this protein is Large ribosomal subunit protein uL24.